A 102-amino-acid chain; its full sequence is Large ribosomal subunit protein uL23 (102 aa).

This sequence belongs to the universal ribosomal protein uL23 family. Part of the 50S ribosomal subunit. Contacts protein L29, and trigger factor when it is bound to the ribosome.

Its function is as follows. One of the early assembly proteins it binds 23S rRNA. One of the proteins that surrounds the polypeptide exit tunnel on the outside of the ribosome. Forms the main docking site for trigger factor binding to the ribosome. The polypeptide is Large ribosomal subunit protein uL23 (Methylobacillus flagellatus (strain ATCC 51484 / DSM 6875 / VKM B-1610 / KT)).